We begin with the raw amino-acid sequence, 118 residues long: Large ribosomal subunit protein uL18 (118 aa).

Belongs to the universal ribosomal protein uL18 family. Part of the 50S ribosomal subunit; part of the 5S rRNA/L5/L18/L25 subcomplex. Contacts the 5S and 23S rRNAs.

Functionally, this is one of the proteins that bind and probably mediate the attachment of the 5S RNA into the large ribosomal subunit, where it forms part of the central protuberance. The chain is Large ribosomal subunit protein uL18 from Campylobacter lari (strain RM2100 / D67 / ATCC BAA-1060).